A 363-amino-acid chain; its full sequence is N-acetylmuramate/N-acetylglucosamine kinase (363 aa).

The protein belongs to the kinase AmgK family.

It carries out the reaction N-acetyl-D-muramate + ATP = N-acetyl-alpha-D-muramate 1-phosphate + ADP + H(+). It catalyses the reaction N-acetyl-D-glucosamine + ATP = N-acetyl-alpha-D-glucosamine 1-phosphate + ADP + H(+). Its pathway is cell wall biogenesis; peptidoglycan recycling. In terms of biological role, sugar kinase that catalyzes the ATP-dependent phosphorylation of N-acetylmuramate (MurNAc) and N-acetylglucosamine (GlcNAc) at its C1 hydroxyl group, leading to MurNAc alpha-1P and GlcNAc alpha-1P, respectively. Is likely involved in peptidoglycan recycling as part of a cell wall recycling pathway that bypasses de novo biosynthesis of the peptidoglycan precursor UDP-MurNAc. Is able to complement the fosfomycin sensitivity phenotype of a P.putida mutant lacking amgK. The protein is N-acetylmuramate/N-acetylglucosamine kinase of Caulobacter vibrioides (strain ATCC 19089 / CIP 103742 / CB 15) (Caulobacter crescentus).